Here is a 40-residue protein sequence, read N- to C-terminus: uncharacterized protein (40 aa).

This is an uncharacterized protein from Dictyostelium discoideum (Social amoeba).